We begin with the raw amino-acid sequence, 215 residues long: Rho-related GTP-binding protein RhoF (215 aa).

The residue at position 1 (Met1) is an N-acetylmethionine. Gly30–Thr37 lines the GTP pocket. An Effector region motif is present at residues Tyr52–Tyr60. GTP contacts are provided by residues Asp77–Gln81 and Cys135–Asp138. Cys212 bears the Cysteine methyl ester mark. Cys212 carries S-geranylgeranyl cysteine lipidation. Residues Leu213–Leu215 constitute a propeptide, removed in mature form.

It belongs to the small GTPase superfamily. Rho family.

The protein resides in the cell membrane. Its subcellular location is the cytoplasm. The protein localises to the cytoskeleton. In terms of biological role, plasma membrane-associated small GTPase which cycles between an active GTP-bound and an inactive GDP-bound state. Causes the formation of thin, actin-rich surface projections called filopodia. Functions cooperatively with CDC42 and Rac to generate additional structures, increasing the diversity of actin-based morphology. This is Rho-related GTP-binding protein RhoF (RHOF) from Bos taurus (Bovine).